We begin with the raw amino-acid sequence, 262 residues long: Cytochrome c oxidase subunit 3 (262 aa).

A run of 7 helical transmembrane segments spans residues 11 to 31 (LVEPSPWPLVGGSAAFTLTVG), 32 to 52 (LVMWFHYNSISLMILGLVMIV), 83 to 103 (GMVLFIVSEVFFFLAFFWAFF), 125 to 147 (LNAFAVPLLNTAVLLSSGVTVTW), 160 to 180 (AIQSLAITVMLGLYFTGLQAW), 198 to 218 (FFVATGFHGLHVIIGSTFLMV), and 240 to 260 (AWYWHFVDVVWLFLYVCIYWW).

Belongs to the cytochrome c oxidase subunit 3 family. As to quaternary structure, component of the cytochrome c oxidase (complex IV, CIV), a multisubunit enzyme composed of a catalytic core of 3 subunits and several supernumerary subunits. The complex exists as a monomer or a dimer and forms supercomplexes (SCs) in the inner mitochondrial membrane with ubiquinol-cytochrome c oxidoreductase (cytochrome b-c1 complex, complex III, CIII).

The protein resides in the mitochondrion inner membrane. The catalysed reaction is 4 Fe(II)-[cytochrome c] + O2 + 8 H(+)(in) = 4 Fe(III)-[cytochrome c] + 2 H2O + 4 H(+)(out). Functionally, component of the cytochrome c oxidase, the last enzyme in the mitochondrial electron transport chain which drives oxidative phosphorylation. The respiratory chain contains 3 multisubunit complexes succinate dehydrogenase (complex II, CII), ubiquinol-cytochrome c oxidoreductase (cytochrome b-c1 complex, complex III, CIII) and cytochrome c oxidase (complex IV, CIV), that cooperate to transfer electrons derived from NADH and succinate to molecular oxygen, creating an electrochemical gradient over the inner membrane that drives transmembrane transport and the ATP synthase. Cytochrome c oxidase is the component of the respiratory chain that catalyzes the reduction of oxygen to water. Electrons originating from reduced cytochrome c in the intermembrane space (IMS) are transferred via the dinuclear copper A center (CU(A)) of subunit 2 and heme A of subunit 1 to the active site in subunit 1, a binuclear center (BNC) formed by heme A3 and copper B (CU(B)). The BNC reduces molecular oxygen to 2 water molecules using 4 electrons from cytochrome c in the IMS and 4 protons from the mitochondrial matrix. This is Cytochrome c oxidase subunit 3 (COIII) from Branchiostoma floridae (Florida lancelet).